We begin with the raw amino-acid sequence, 95 residues long: Nickel and cobalt resistance protein CnrY (95 aa).

Over 1-45 the chain is Cytoplasmic; that stretch reads MADVEEWLTHARKVTQEASIGVDVTSIQECISAEPAQRVLVARRD. Residues 46–68 traverse the membrane as a helical segment; it reads AWRAICCAAFAALVAFAAINRVA. The Periplasmic segment spans residues 69-95; it reads TIMLEKPAPTWVATPSAASPFGLLIGK.

This sequence to A.xylosoxydans NccY.

It localises to the cell inner membrane. Its function is as follows. Nickel and cobalt resistance proteins CnrA, CnrB, CnrC CnrH and CnrR may be involved in the regulation of CNR. CnrH alone is able to activate cnr expression, and both CnrY and CrnX are needed for nickel induction of CnrH. In the absence of wild-type CnrY (due either to a frameshift, PubMed:10671463 or absence of the transcript, PubMed:10671464), nickel and cobalt resistance is constitutive, indicating that CrnY may act as a repressor or an anti-sigma factor. The chain is Nickel and cobalt resistance protein CnrY (cnrY) from Cupriavidus metallidurans (strain ATCC 43123 / DSM 2839 / NBRC 102507 / CH34) (Ralstonia metallidurans).